Consider the following 242-residue polypeptide: Ras-like protein family member 11A (242 aa).

A small GTPase-like region spans residues 17–241; the sequence is ESSSDYLLPK…SSKAKASSAL (225 aa). GTP is bound by residues 34 to 41, 81 to 88, and 147 to 150; these read GAGCVGKS, DTPGGIQA, and NKGD.

Belongs to the small GTPase superfamily. Ras family. In terms of assembly, interacts with UBF/UBTF.

It localises to the nucleus. The protein resides in the nucleolus. The enzyme catalyses GTP + H2O = GDP + phosphate + H(+). Its function is as follows. Regulator of rDNA transcription. Acts in cooperation UBF/UBTF and positively regulates RNA polymerase I transcription. This Mus musculus (Mouse) protein is Ras-like protein family member 11A.